The following is a 399-amino-acid chain: Flavohemoprotein (399 aa).

The Globin domain occupies 1 to 138 (MLAEKTRSII…IADIFITVEK (138 aa)). Position 22 is a phosphothreonine (Thr22). His85 provides a ligand contact to heme b. Catalysis depends on charge relay system residues Tyr95 and Glu137. A reductase region spans residues 146–399 (WPGWKPFDIT…FGPKMSTVQV (254 aa)). In terms of domain architecture, FAD-binding FR-type spans 147–264 (PGWKPFDITA…SAPAGDFAIN (118 aa)). FAD-binding positions include Tyr189 and 207 to 210 (RHYS). 281 to 286 (GVGVTP) contributes to the NADP(+) binding site. 389 to 392 (PFGP) serves as a coordination point for FAD.

Belongs to the globin family. Two-domain flavohemoproteins subfamily. This sequence in the C-terminal section; belongs to the flavoprotein pyridine nucleotide cytochrome reductase family. FAD is required as a cofactor. It depends on heme b as a cofactor.

The protein localises to the cytoplasm. It catalyses the reaction 2 nitric oxide + NADPH + 2 O2 = 2 nitrate + NADP(+) + H(+). The catalysed reaction is 2 nitric oxide + NADH + 2 O2 = 2 nitrate + NAD(+) + H(+). Is involved in NO detoxification in an aerobic process, termed nitric oxide dioxygenase (NOD) reaction that utilizes O(2) and NAD(P)H to convert NO to nitrate, which protects the fungus from various noxious nitrogen compounds. Therefore, plays a central role in the inducible response to nitrosative stress. Its function is as follows. In the presence of oxygen and NADH, it has NADH oxidase activity, which leads to the generation of superoxide and H(2)O(2). Under anaerobic conditions, it also exhibits nitric oxide reductase and FAD reductase activities. However, all these reactions are much lower than NOD activity. The chain is Flavohemoprotein (YHB1) from Saccharomyces cerevisiae (strain ATCC 204508 / S288c) (Baker's yeast).